The following is a 147-amino-acid chain: Cystatin-9-like (147 aa).

The N-terminal stretch at 1–28 (MLGLPWKGGLSWALLLLLLGSQILLIYA) is a signal peptide. Residues Cys-98 and Cys-108 are joined by a disulfide bond. N-linked (GlcNAc...) asparagine glycosylation is found at Asn-117 and Asn-139. Cys-122 and Cys-142 form a disulfide bridge.

This sequence belongs to the cystatin family. As to expression, specifically expressed in testis.

Its subcellular location is the secreted. The chain is Cystatin-9-like (CST9L) from Homo sapiens (Human).